The chain runs to 484 residues: Glycogen synthase (484 aa).

Lysine 15 contacts ADP-alpha-D-glucose.

It belongs to the glycosyltransferase 1 family. Bacterial/plant glycogen synthase subfamily.

It catalyses the reaction [(1-&gt;4)-alpha-D-glucosyl](n) + ADP-alpha-D-glucose = [(1-&gt;4)-alpha-D-glucosyl](n+1) + ADP + H(+). It participates in glycan biosynthesis; glycogen biosynthesis. In terms of biological role, synthesizes alpha-1,4-glucan chains using ADP-glucose. In Geotalea daltonii (strain DSM 22248 / JCM 15807 / FRC-32) (Geobacter daltonii), this protein is Glycogen synthase.